The following is a 61-amino-acid chain: MSKGTPSMGKRNKGSYHIRCRRCGRRAYHVRKKRCAACGFPNKRMRKYSWQNKKVNGKRIK.

Positions 20, 23, 35, and 38 each coordinate Zn(2+). Residues Cys20–Cys38 form a C4-type zinc finger.

It belongs to the eukaryotic ribosomal protein eL37 family. Requires Zn(2+) as cofactor.

In terms of biological role, binds to the 23S rRNA. The polypeptide is Large ribosomal subunit protein eL37 (rpl37e) (Methanocaldococcus jannaschii (strain ATCC 43067 / DSM 2661 / JAL-1 / JCM 10045 / NBRC 100440) (Methanococcus jannaschii)).